A 405-amino-acid polypeptide reads, in one-letter code: Indoleamine 2,3-dioxygenase acdA (405 aa).

H312 is a heme binding site.

Belongs to the indoleamine 2,3-dioxygenase family. Heme is required as a cofactor.

The enzyme catalyses L-tryptophan + O2 = N-formyl-L-kynurenine. It participates in secondary metabolite biosynthesis. In terms of biological role, indoleamine 2,3-dioxygenase; part of the gene cluster that mediates the biosynthesis of aspcandine, a pyrrolobenzazepine alkaloid. Initially, the indoleamine 2,3-dioxygenase acdA accepts L-tryptophan and performs the oxidative opening of the indole ring to yield N'-formyl-L-kynurenine, which undergoes the spontaneous deformylation reaction to provide L-kynurenine. The kynurenine 3-monooxygenase acdD then hydroxylates L-kynurenine to afford 3-hydroxy-L-kynurenine. 3-hydroxy-L-kynurenine is activated by the A domain of the NRPS-PKS acdB and subsequently loaded onto the enzyme. The KS domain conducts the decarboxylative condensation of the 3-hydroxy-L-kynurenyl and malonyl moieties, and subsequent nucleophilic attacks by the two amino groups would occur nonenzymatically at two distinct positions, achieving the chain release and the construction of the tricyclic system. Finally, a dehydration reaction completes the biosynthesis to yield aspcandine. The protein is Indoleamine 2,3-dioxygenase acdA of Aspergillus candidus.